The chain runs to 68 residues: Sperm-associated antigen 11A (68 aa).

An N-terminal signal peptide occupies residues 1-19 (MKVLLLFAVFFCLVQRNSG). Disulfide bonds link Cys30-Cys59, Cys37-Cys52, and Cys42-Cys60.

The protein belongs to the beta-defensin family. In terms of tissue distribution, only expressed in epididymis (middle part of the caput).

The protein resides in the secreted. Has antimicrobial activity against E.coli. Plays a role in the defense response in the male reproductive tract, contributing to sperm maturation, storage and protection. This is Sperm-associated antigen 11A from Rattus norvegicus (Rat).